The sequence spans 426 residues: Dihydroorotase (426 aa).

Zn(2+)-binding residues include histidine 58 and histidine 60. Residues 60–62 (HLR) and asparagine 92 each bind substrate. Zn(2+)-binding residues include aspartate 150, histidine 177, and histidine 230. Asparagine 276 provides a ligand contact to substrate. Aspartate 303 is a binding site for Zn(2+). Aspartate 303 is an active-site residue. Residues histidine 307 and 321–322 (FG) contribute to the substrate site.

It belongs to the metallo-dependent hydrolases superfamily. DHOase family. Class I DHOase subfamily. Zn(2+) serves as cofactor.

The catalysed reaction is (S)-dihydroorotate + H2O = N-carbamoyl-L-aspartate + H(+). Its pathway is pyrimidine metabolism; UMP biosynthesis via de novo pathway; (S)-dihydroorotate from bicarbonate: step 3/3. Its function is as follows. Catalyzes the reversible cyclization of carbamoyl aspartate to dihydroorotate. In Listeria monocytogenes serovar 1/2a (strain ATCC BAA-679 / EGD-e), this protein is Dihydroorotase.